The primary structure comprises 397 residues: Corticosteroid-binding globulin (397 aa).

An N-terminal signal peptide occupies residues 1-22; it reads MSLALYTCLFWLCTSGLWTTQA. Asn-89, Asn-169, Asn-217, and Asn-232 each carry an N-linked (GlcNAc...) asparagine glycan. Gln-247 contacts cortisol. N-linked (GlcNAc...) asparagine glycosylation is present at Asn-253. Asp-279 is a cortisol binding site. The N-linked (GlcNAc...) asparagine glycan is linked to Asn-320. Trp-385 contacts cortisol.

It belongs to the serpin family. Expressed by the liver; secreted in plasma.

The protein localises to the secreted. Major transport protein for glucocorticoids and progestins in the blood of almost all vertebrate species. The chain is Corticosteroid-binding globulin (Serpina6) from Mus musculus (Mouse).